The chain runs to 60 residues: Large ribosomal subunit protein bL32 (60 aa).

The protein belongs to the bacterial ribosomal protein bL32 family.

This is Large ribosomal subunit protein bL32 from Streptococcus gordonii (strain Challis / ATCC 35105 / BCRC 15272 / CH1 / DL1 / V288).